We begin with the raw amino-acid sequence, 220 residues long: MQGQDLAMLPEIRLMGDVDVAALSPLFRGMVMTVSYAETQGGIGLTASGAMNRKFVHWAAVHFDWPGHTSDDLYSVSKVLNEADMPPLLVVRDMLKHLRLLRRRKDVLVPTQRGRDFLVRPQAFFDLIATDYLYAYIHYGQTREAVRNRMRWWHVFLNLINMKAETGCSLDDLANELYPSESYPEPAEMTVETWAERSALRYDSFARCAGWDCCTKSARG.

This is an uncharacterized protein from Sinorhizobium fredii (strain NBRC 101917 / NGR234).